The chain runs to 769 residues: Cullin-3 (769 aa).

The tract at residues 614–655 (DRELPSTTSSTTTTTTTATSSSTSTSPSSSSSSISTPTPSKS) is disordered. Residues 618 to 653 (PSTTSSTTTTTTTATSSSTSTSPSSSSSSISTPTPS) are compositionally biased toward low complexity. Residues 699–761 (DRKHQIEASI…REYLERSKQD (63 aa)) form the Cullin neddylation domain. A Glycyl lysine isopeptide (Lys-Gly) (interchain with G-Cter in NEDD8) cross-link involves residue Lys713.

The protein belongs to the cullin family. In terms of processing, neddylated. Deneddylated via its interaction with the COP9 signalosome (CSN) complex.

The protein resides in the nucleus. Its pathway is protein modification; protein ubiquitination. Its function is as follows. Probable core component of cullin-based SCF-like E3 ubiquitin-protein ligase complexes which mediate the ubiquitination and subsequent proteasomal degradation of target proteins. The E3 ubiquitin-protein ligase activity of the complex is dependent on the neddylation of the cullin subunit. The chain is Cullin-3 (culC) from Dictyostelium discoideum (Social amoeba).